Consider the following 105-residue polypeptide: Replication initiation control protein YabA (105 aa).

The Zn(2+) site is built by histidine 79, cysteine 81, cysteine 95, and cysteine 98.

This sequence belongs to the YabA family. In terms of assembly, homotetramer. Interacts with both DnaA and DnaN, acting as a bridge between these two proteins. The cofactor is Zn(2+).

It localises to the cytoplasm. The protein resides in the nucleoid. Functionally, involved in control of chromosome replication initiation. Inhibits the cooperative binding of DnaA to the oriC region, thus negatively regulating initiation of chromosome replication. Inhibits the ability of DnaA-ATP to form a helix on DNA; does not disassemble preformed DnaA-DNA helices. Decreases the residence time of DnaA on the chromosome at its binding sites (oriC, replication forks and promoter-binding sites). Tethers DnaA to the replication machinery via the DNA polymerase beta sliding clamp subunit (dnaN). Associates with oriC and other DnaA targets on the chromosome in a DnaA-dependent manner. This Streptococcus suis (strain 98HAH33) protein is Replication initiation control protein YabA.